Consider the following 146-residue polypeptide: VHLTADEKVSLSSLWGKVNPDELGGEALGRLLLVYPWTQRFFDSFGDLSSAVAVMGNAKVKAHGKKVLDSFSDGLKHLDNLKGTFASLSELHCDKLHVDPENFKLLGNVLVLVLAHHLGKEFTPQAQGTFQKVVAGVANALAHKYH.

The residue at position 1 (Val-1) is an N-acetylvaline. A Globin domain is found at 2-146 (HLTADEKVSL…VANALAHKYH (145 aa)). Ser-44 bears the Phosphoserine mark. N6-acetyllysine is present on Lys-59. His-63 lines the heme b pocket. Lys-82 is modified (N6-acetyllysine). His-92 contributes to the heme b binding site. An S-nitrosocysteine modification is found at Cys-93. Lys-144 bears the N6-acetyllysine mark.

Belongs to the globin family. As to quaternary structure, heterotetramer of two alpha chains and two beta chains. In terms of tissue distribution, red blood cells.

Involved in oxygen transport from the lung to the various peripheral tissues. The protein is Hemoglobin subunit beta of Tamias striatus (Eastern chipmunk).